A 322-amino-acid chain; its full sequence is uncharacterized protein (322 aa).

Composition is skewed to basic residues over residues 1–16 (MPGN…KSGT) and 43–61 (LRPH…RRPV). The interval 1-69 (MPGNSRRRGA…PVKRADETET (69 aa)) is disordered. Gly261, Ile281, and Leu290 together coordinate S-adenosyl-L-methionine.

This sequence belongs to the class IV-like SAM-binding methyltransferase superfamily. RNA methyltransferase TrmH family.

This is an uncharacterized protein from Mycobacterium bovis (strain ATCC BAA-935 / AF2122/97).